Here is a 201-residue protein sequence, read N- to C-terminus: Sterile alpha motif domain-containing protein 12 (201 aa).

The SAM domain maps to 77–143 (WTQQDVCKWL…LQQVLQLKVR (67 aa)).

This Pongo abelii (Sumatran orangutan) protein is Sterile alpha motif domain-containing protein 12 (SAMD12).